A 105-amino-acid chain; its full sequence is Iron-sulfur cluster assembly protein CyaY (105 aa).

This sequence belongs to the frataxin family.

Involved in iron-sulfur (Fe-S) cluster assembly. May act as a regulator of Fe-S biogenesis. The protein is Iron-sulfur cluster assembly protein CyaY of Photobacterium profundum (strain SS9).